The primary structure comprises 252 residues: 14-3-3 protein 10 (252 aa).

Belongs to the 14-3-3 family. Homodimer.

In Solanum lycopersicum (Tomato), this protein is 14-3-3 protein 10 (TFT10).